A 400-amino-acid polypeptide reads, in one-letter code: Deoxyguanosinetriphosphate triphosphohydrolase-like protein (400 aa).

The HD domain occupies Arg-73–Asn-215.

It belongs to the dGTPase family. Type 2 subfamily.

This Bartonella quintana (strain Toulouse) (Rochalimaea quintana) protein is Deoxyguanosinetriphosphate triphosphohydrolase-like protein.